Consider the following 243-residue polypeptide: DNA repair protein RecO (243 aa).

The protein belongs to the RecO family.

Its function is as follows. Involved in DNA repair and RecF pathway recombination. The protein is DNA repair protein RecO of Thermobifida fusca (strain YX).